Consider the following 366-residue polypeptide: Chorismate synthase (366 aa).

Residues Arg-48 and Arg-54 each coordinate NADP(+). FMN-binding positions include 125 to 127 (RSS), 238 to 239 (NA), Gly-278, 293 to 297 (KPTSS), and Arg-319.

The protein belongs to the chorismate synthase family. In terms of assembly, homotetramer. The cofactor is FMNH2.

The catalysed reaction is 5-O-(1-carboxyvinyl)-3-phosphoshikimate = chorismate + phosphate. It participates in metabolic intermediate biosynthesis; chorismate biosynthesis; chorismate from D-erythrose 4-phosphate and phosphoenolpyruvate: step 7/7. Catalyzes the anti-1,4-elimination of the C-3 phosphate and the C-6 proR hydrogen from 5-enolpyruvylshikimate-3-phosphate (EPSP) to yield chorismate, which is the branch point compound that serves as the starting substrate for the three terminal pathways of aromatic amino acid biosynthesis. This reaction introduces a second double bond into the aromatic ring system. The protein is Chorismate synthase of Chromobacterium violaceum (strain ATCC 12472 / DSM 30191 / JCM 1249 / CCUG 213 / NBRC 12614 / NCIMB 9131 / NCTC 9757 / MK).